The following is a 486-amino-acid chain: Chromosomal replication initiator protein DnaA (486 aa).

The interval methionine 1–threonine 79 is domain I, interacts with DnaA modulators. The domain II stretch occupies residues threonine 79–proline 141. The segment at phenylalanine 142–isoleucine 358 is domain III, AAA+ region. Residues glycine 186, glycine 188, lysine 189, and threonine 190 each contribute to the ATP site. Residues aspartate 359–asparagine 486 are domain IV, binds dsDNA.

This sequence belongs to the DnaA family. Oligomerizes as a right-handed, spiral filament on DNA at oriC.

It localises to the cytoplasm. Plays an essential role in the initiation and regulation of chromosomal replication. ATP-DnaA binds to the origin of replication (oriC) to initiate formation of the DNA replication initiation complex once per cell cycle. Binds the DnaA box (a 9 base pair repeat at the origin) and separates the double-stranded (ds)DNA. Forms a right-handed helical filament on oriC DNA; dsDNA binds to the exterior of the filament while single-stranded (ss)DNA is stabiized in the filament's interior. The ATP-DnaA-oriC complex binds and stabilizes one strand of the AT-rich DNA unwinding element (DUE), permitting loading of DNA polymerase. After initiation quickly degrades to an ADP-DnaA complex that is not apt for DNA replication. Binds acidic phospholipids. In terms of biological role, binds to the bpuR promoter, possibly at 5'-TTTTTAAA-3'. This is Chromosomal replication initiator protein DnaA from Borreliella burgdorferi (strain ATCC 35210 / DSM 4680 / CIP 102532 / B31) (Borrelia burgdorferi).